A 364-amino-acid chain; its full sequence is MRLMVSGGGTGGHIYPALALIKALKKREPNSAVMYVGSERGLESTIVPAKGIPFQATRIQGFKRSLSLENFKTVYLFLKSVHEAKKMIRQFKPDVVVGTGGYVSGAVVYAAARLHVPTLIHEQNSVVGITNRFLSRYVDRIAYVFDAALDQLPVNKMVKTGNPRAQEAAEVVSHFSWTEYGLQDDVPTLLIFGGSQGALKINAATVAAIPEFNHREYQVVFVTGQKRYDGVMAQLKGTTVADNVVIKPYIGNMPEVLPRVAAIVGRAGATSLAEITADGIPSILIPSPYVTADHQTKNANSLATVGAAEIIKEADLTGETLIAKADQLMTNDALRQDMATASKQLGVPDAADRVLDVVEALKRD.

Residues threonine 10–glycine 12, asparagine 124, serine 195, isoleucine 250, and glutamine 295 contribute to the UDP-N-acetyl-alpha-D-glucosamine site.

It belongs to the glycosyltransferase 28 family. MurG subfamily.

The protein resides in the cell membrane. The enzyme catalyses Mur2Ac(oyl-L-Ala-gamma-D-Glu-L-Lys-D-Ala-D-Ala)-di-trans,octa-cis-undecaprenyl diphosphate + UDP-N-acetyl-alpha-D-glucosamine = beta-D-GlcNAc-(1-&gt;4)-Mur2Ac(oyl-L-Ala-gamma-D-Glu-L-Lys-D-Ala-D-Ala)-di-trans,octa-cis-undecaprenyl diphosphate + UDP + H(+). It participates in cell wall biogenesis; peptidoglycan biosynthesis. Functionally, cell wall formation. Catalyzes the transfer of a GlcNAc subunit on undecaprenyl-pyrophosphoryl-MurNAc-pentapeptide (lipid intermediate I) to form undecaprenyl-pyrophosphoryl-MurNAc-(pentapeptide)GlcNAc (lipid intermediate II). The chain is UDP-N-acetylglucosamine--N-acetylmuramyl-(pentapeptide) pyrophosphoryl-undecaprenol N-acetylglucosamine transferase from Levilactobacillus brevis (strain ATCC 367 / BCRC 12310 / CIP 105137 / JCM 1170 / LMG 11437 / NCIMB 947 / NCTC 947) (Lactobacillus brevis).